The primary structure comprises 377 residues: UDP-N-acetylglucosamine 2-epimerase (377 aa).

The active site involves His212.

It belongs to the UDP-N-acetylglucosamine 2-epimerase family. As to quaternary structure, homodimer.

It catalyses the reaction UDP-N-acetyl-alpha-D-glucosamine + H2O = aldehydo-N-acetyl-D-mannosamine + UDP + H(+). In terms of biological role, catalyzes the conversion of UDP-N-acetylglucosamine (UDP-GlcNAc) to UDP and N-acetyl-D-mannosamine (ManNAc). This Neisseria meningitidis serogroup B (strain ATCC BAA-335 / MC58) protein is UDP-N-acetylglucosamine 2-epimerase (siaA).